Here is a 296-residue protein sequence, read N- to C-terminus: Enoyl-CoA hydratase domain-containing protein 2, mitochondrial (296 aa).

At K101 the chain carries N6-acetyllysine; alternate. K101 carries the N6-succinyllysine; alternate modification.

It belongs to the enoyl-CoA hydratase/isomerase family.

It is found in the mitochondrion. This Bos taurus (Bovine) protein is Enoyl-CoA hydratase domain-containing protein 2, mitochondrial (ECHDC2).